The primary structure comprises 510 residues: Chromosomal replication initiator protein DnaA (510 aa).

The domain I, interacts with DnaA modulators stretch occupies residues 1-107 (MTNDPGSGFA…VRIAPPPADD (107 aa)). Residues 107 to 169 (DDDDSVAAAV…ADTSASADGT (63 aa)) are domain II. Positions 119–168 (PGLEASPETSQEVSDEIDDFGENAPKSRQSWPTHFKKRSTDADTSASADG) are disordered. A domain III, AAA+ region region spans residues 170–386 (SLNRRYTFDT…GALIRVTAFA (217 aa)). Residues glycine 214, glycine 216, lysine 217, and threonine 218 each contribute to the ATP site. Positions 387 to 510 (SLNKTPIDKA…TTRIRQRSKR (124 aa)) are domain IV, binds dsDNA.

It belongs to the DnaA family. Oligomerizes as a right-handed, spiral filament on DNA at oriC.

It localises to the cytoplasm. Plays an essential role in the initiation and regulation of chromosomal replication. ATP-DnaA binds to the origin of replication (oriC) to initiate formation of the DNA replication initiation complex once per cell cycle. Binds the DnaA box (a 9 base pair repeat at the origin) and separates the double-stranded (ds)DNA. Forms a right-handed helical filament on oriC DNA; dsDNA binds to the exterior of the filament while single-stranded (ss)DNA is stabiized in the filament's interior. The ATP-DnaA-oriC complex binds and stabilizes one strand of the AT-rich DNA unwinding element (DUE), permitting loading of DNA polymerase. After initiation quickly degrades to an ADP-DnaA complex that is not apt for DNA replication. Binds acidic phospholipids. The polypeptide is Chromosomal replication initiator protein DnaA (Mycobacterium ulcerans (strain Agy99)).